The following is a 442-amino-acid chain: MQKTIPMTAYKSTRLSGIIKIPGDKSISHRSLILGGLASGETHIHGILESDDVFNTAAAMQALGACIIKKDDLWIIRGTGNGCLLAAQKPLDFGNAGTGARLVMGMVGPYHMKTTFIGDASLSKRPMARILDPLQLMGVEIEATHGNYLPLTLYGPKMTNPICYRIPVASAQVKSAILLAGLNTAGTTTVIEPILTRDHTEKMLKAFGAKLEIEKNAEGTRFIHLNGHPHLTGQTIHIPGDPSSAAFPIVAALLIEDSDITIENVLINNSRMGLIETLWEMGAQIELLNQRQTGGEDVANLRVKSSVLKGVTVPKERAPSMIDEYPALAVAAAFAEGKTVMLGIEELRVKESDRLSVLAQGLKINHVDCEEGQDFLIVHGKGSAKGLGGGHVTTHLDHRIAMSFLIFGLVSEKPVTIDDKRMIATSFPEFIPFIQQLGGKIS.

K25, S26, and R30 together coordinate 3-phosphoshikimate. K25 is a binding site for phosphoenolpyruvate. 2 residues coordinate phosphoenolpyruvate: G97 and R125. 3-phosphoshikimate contacts are provided by S170, Q172, D323, and K350. Residue Q172 coordinates phosphoenolpyruvate. D323 acts as the Proton acceptor in catalysis. Residues R354 and R399 each coordinate phosphoenolpyruvate.

It belongs to the EPSP synthase family. As to quaternary structure, monomer.

The protein resides in the cytoplasm. The enzyme catalyses 3-phosphoshikimate + phosphoenolpyruvate = 5-O-(1-carboxyvinyl)-3-phosphoshikimate + phosphate. Its pathway is metabolic intermediate biosynthesis; chorismate biosynthesis; chorismate from D-erythrose 4-phosphate and phosphoenolpyruvate: step 6/7. In terms of biological role, catalyzes the transfer of the enolpyruvyl moiety of phosphoenolpyruvate (PEP) to the 5-hydroxyl of shikimate-3-phosphate (S3P) to produce enolpyruvyl shikimate-3-phosphate and inorganic phosphate. This chain is 3-phosphoshikimate 1-carboxyvinyltransferase, found in Bartonella henselae (strain ATCC 49882 / DSM 28221 / CCUG 30454 / Houston 1) (Rochalimaea henselae).